The chain runs to 862 residues: Leucine--tRNA ligase (862 aa).

Residues 42-52 carry the 'HIGH' region motif; sequence PYPSGRLHMGH. Positions 622-626 match the 'KMSKS' region motif; that stretch reads KMSKS. An ATP-binding site is contributed by lysine 625.

This sequence belongs to the class-I aminoacyl-tRNA synthetase family.

The protein resides in the cytoplasm. The catalysed reaction is tRNA(Leu) + L-leucine + ATP = L-leucyl-tRNA(Leu) + AMP + diphosphate. In Vibrio campbellii (strain ATCC BAA-1116), this protein is Leucine--tRNA ligase.